The primary structure comprises 222 residues: Ras-related protein RabT1 (222 aa).

37 to 44 contributes to the GTP binding site; the sequence is GDNKTGKS. The Effector region motif lies at 59–66; it reads VSSIGVDF. GTP is bound by residues 85–89 and 145–148; these read DVNSC and NKCD. Cysteine 219 carries the cysteine methyl ester modification. A lipid anchor (S-geranylgeranyl cysteine) is attached at cysteine 219. Positions 220 to 222 are cleaved as a propeptide — removed in mature form; that stretch reads NIL.

The protein belongs to the small GTPase superfamily. Rab family.

The protein localises to the cell membrane. The polypeptide is Ras-related protein RabT1 (rabT1) (Dictyostelium discoideum (Social amoeba)).